Reading from the N-terminus, the 114-residue chain is UPF0145 protein PYRAB04900 (114 aa).

This sequence belongs to the UPF0145 family.

The polypeptide is UPF0145 protein PYRAB04900 (Pyrococcus abyssi (strain GE5 / Orsay)).